Reading from the N-terminus, the 172-residue chain is MRWIGIDPGLRITGFGVIDVDGQKLTYVASGTIESGDPAKGLPERLGALYAGVKEVLETYRPEQAAIEEVFLNVNPRSTLMLGQARGAVIAALVSEKLPVAEYSALRVKQAIVGTGRAAKPQVQEMVKRLLRLSRAPGTDASDALGVAICAAHHSQIPKAITSALASKKRSK.

Catalysis depends on residues D7, E68, and D140. Mg(2+) is bound by residues D7, E68, and D140.

Belongs to the RuvC family. In terms of assembly, homodimer which binds Holliday junction (HJ) DNA. The HJ becomes 2-fold symmetrical on binding to RuvC with unstacked arms; it has a different conformation from HJ DNA in complex with RuvA. In the full resolvosome a probable DNA-RuvA(4)-RuvB(12)-RuvC(2) complex forms which resolves the HJ. Requires Mg(2+) as cofactor.

Its subcellular location is the cytoplasm. It carries out the reaction Endonucleolytic cleavage at a junction such as a reciprocal single-stranded crossover between two homologous DNA duplexes (Holliday junction).. In terms of biological role, the RuvA-RuvB-RuvC complex processes Holliday junction (HJ) DNA during genetic recombination and DNA repair. Endonuclease that resolves HJ intermediates. Cleaves cruciform DNA by making single-stranded nicks across the HJ at symmetrical positions within the homologous arms, yielding a 5'-phosphate and a 3'-hydroxyl group; requires a central core of homology in the junction. The consensus cleavage sequence is 5'-(A/T)TT(C/G)-3'. Cleavage occurs on the 3'-side of the TT dinucleotide at the point of strand exchange. HJ branch migration catalyzed by RuvA-RuvB allows RuvC to scan DNA until it finds its consensus sequence, where it cleaves and resolves the cruciform DNA. This Polynucleobacter asymbioticus (strain DSM 18221 / CIP 109841 / QLW-P1DMWA-1) (Polynucleobacter necessarius subsp. asymbioticus) protein is Crossover junction endodeoxyribonuclease RuvC.